A 60-amino-acid chain; its full sequence is Homeobox protein engrailed-like A (60 aa).

A DNA-binding region (homeobox) is located at residues 1 to 41 (ADQLARLRAEFQANRYLTEERRQNLARELSLNEAQIKIWFQ).

This sequence belongs to the engrailed homeobox family.

It localises to the nucleus. The chain is Homeobox protein engrailed-like A from Myxine glutinosa (Atlantic hagfish).